An 86-amino-acid chain; its full sequence is Conotoxin S6.10 (86 aa).

The signal sequence occupies residues 1–22 (MKLTCVLIIAVLFLTACQLATA). The propeptide occupies 23 to 45 (KTYSKGRQKHRALRSTDKNIKLT). Cystine bridges form between Cys-48–Cys-62, Cys-55–Cys-66, and Cys-61–Cys-73.

The protein belongs to the conotoxin O1 superfamily. As to expression, expressed by the venom duct.

Its subcellular location is the secreted. The sequence is that of Conotoxin S6.10 from Conus striatus (Striated cone).